A 108-amino-acid chain; its full sequence is UPF0145 protein AF_0869 (108 aa).

It belongs to the UPF0145 family.

This is UPF0145 protein AF_0869 from Archaeoglobus fulgidus (strain ATCC 49558 / DSM 4304 / JCM 9628 / NBRC 100126 / VC-16).